Here is a 1029-residue protein sequence, read N- to C-terminus: Endosome/lysosome-associated apoptosis and autophagy regulator family member 2 (1029 aa).

A signal peptide spans M1–A47. The Extracellular segment spans residues G48–K929. N169 carries an N-linked (GlcNAc...) asparagine glycan. Cystine bridges form between C293-C310, C323-C346, and C326-C358. N405 and N691 each carry an N-linked (GlcNAc...) asparagine glycan. The region spanning S672–L877 is the MRH domain. 4 cysteine pairs are disulfide-bonded: C674–C720, C730–C758, C827–C863, and C839–C875. Residues V930 to W950 traverse the membrane as a helical segment. Over K951–I1029 the chain is Cytoplasmic. S1018 carries the phosphoserine modification.

It belongs to the ELAPOR family.

Its subcellular location is the cell membrane. In terms of biological role, functions as a regulator of the BMP signaling pathway and may be involved in epidermal differentiation. This is Endosome/lysosome-associated apoptosis and autophagy regulator family member 2 from Homo sapiens (Human).